The sequence spans 518 residues: Glucose-6-phosphate 1-dehydrogenase (518 aa).

Residues 36–43, Arg70, and Lys169 each bind NADP(+); that span reads GASGDLAK. Residues Lys169, 199 to 203, Glu237, and Asp256 contribute to the D-glucose 6-phosphate site; that span reads HYLGK. The Proton acceptor role is filled by His261. Arg356 is an NADP(+) binding site. The D-glucose 6-phosphate site is built by Lys359 and Arg364. NADP(+) contacts are provided by Lys365, Arg369, and Arg392. Gln394 provides a ligand contact to D-glucose 6-phosphate. Residues 400–402, 420–422, Arg486, Tyr502, and Trp508 contribute to the NADP(+) site; these read YFK and DLT.

This sequence belongs to the glucose-6-phosphate dehydrogenase family.

It localises to the cytoplasm. Its subcellular location is the cytosol. The enzyme catalyses D-glucose 6-phosphate + NADP(+) = 6-phospho-D-glucono-1,5-lactone + NADPH + H(+). It participates in carbohydrate degradation; pentose phosphate pathway; D-ribulose 5-phosphate from D-glucose 6-phosphate (oxidative stage): step 1/3. Its function is as follows. Cytosolic glucose-6-phosphate dehydrogenase that catalyzes the first and rate-limiting step of the oxidative branch within the pentose phosphate pathway/shunt, an alternative route to glycolysis for the dissimilation of carbohydrates and a major source of reducing power and metabolic intermediates for fatty acid and nucleic acid biosynthetic processes. This is Glucose-6-phosphate 1-dehydrogenase (Zw) from Drosophila yakuba (Fruit fly).